Consider the following 469-residue polypeptide: Putative dipeptidase SE_1424 (469 aa).

His-84 is a Zn(2+) binding site. Asp-86 is a catalytic residue. Asp-115 is a binding site for Zn(2+). The active-site Proton acceptor is Glu-149. Zn(2+) is bound by residues Glu-150, Asp-173, and His-440.

This sequence belongs to the peptidase M20A family. It depends on Zn(2+) as a cofactor.

This Staphylococcus epidermidis (strain ATCC 12228 / FDA PCI 1200) protein is Putative dipeptidase SE_1424.